We begin with the raw amino-acid sequence, 309 residues long: Homoserine O-succinyltransferase (309 aa).

Cysteine 142 serves as the catalytic Acyl-thioester intermediate. The substrate site is built by lysine 163 and serine 192. The active-site Proton acceptor is histidine 235. Glutamate 237 is a catalytic residue. Arginine 249 provides a ligand contact to substrate.

It belongs to the MetA family. In terms of assembly, homodimer.

It localises to the cytoplasm. The catalysed reaction is L-homoserine + succinyl-CoA = O-succinyl-L-homoserine + CoA. It participates in amino-acid biosynthesis; L-methionine biosynthesis via de novo pathway; O-succinyl-L-homoserine from L-homoserine: step 1/1. Functionally, transfers a succinyl group from succinyl-CoA to L-homoserine, forming succinyl-L-homoserine. In Escherichia coli O17:K52:H18 (strain UMN026 / ExPEC), this protein is Homoserine O-succinyltransferase.